An 856-amino-acid polypeptide reads, in one-letter code: Vomeronasal type-2 receptor 116 (856 aa).

Residues 1-18 (MFTLIFLFLFLNIPLLVA) form the signal peptide. At 19-586 (DFISPRCFWK…VFLSYEEPLG (568 aa)) the chain is on the extracellular side. Asparagine 94 carries N-linked (GlcNAc...) asparagine glycosylation. A helical transmembrane segment spans residues 587–607 (VALSLLSLCFSAFTTVVLGIF). The Cytoplasmic portion of the chain corresponds to 608 to 622 (VKHHNTPIVKANNRT). A helical membrane pass occupies residues 623–643 (LTYLLLISLIFCFLCPLLFIG). Residues 644 to 658 (HPNSATCILQQLTFG) are Extracellular-facing. A helical transmembrane segment spans residues 659 to 679 (VVFTVSLSTVLAKTITVVLAF). Over 680 to 690 (KIIASQRMMKY) the chain is Cytoplasmic. The chain crosses the membrane as a helical span at residues 691 to 711 (FLISGAINYIIPICILIQVIV). The Extracellular segment spans residues 712–745 (CAVWLRASPPSVDIDAHSEHGQIIIVCHKGSVNA). Residues 746 to 766 (FYCVLGYLAILAFGSFTLAFL) traverse the membrane as a helical segment. Over 767 to 778 (SRNLPGAFNEAK) the chain is Cytoplasmic. The helical transmembrane segment at 779–799 (SITFSMLVFCSVWVTFIPVYH) threads the bilayer. Residues 800–806 (STKGKVM) are Extracellular-facing. Residues 807–827 (VAVEIFSTLASSAGMLGCIFV) form a helical membrane-spanning segment. The Cytoplasmic segment spans residues 828 to 856 (PKCYTILFRQDQNSLEMIRVKSSSNVHVS).

It belongs to the G-protein coupled receptor 3 family. Expressed in the vomeronasal organ.

It is found in the cell membrane. Functionally, receptor for the Esp1 pheromone. Mediates the response to Esp1 which enhances female sexual receptive behavior (lordosis) upon male mounting, resulting in successful copulation. The sequence is that of Vomeronasal type-2 receptor 116 from Mus musculus (Mouse).